The chain runs to 466 residues: Cysteine--tRNA ligase (466 aa).

Cysteine 27 serves as a coordination point for Zn(2+). A 'HIGH' region motif is present at residues 29–39 (PTVYDLAHIGN). Zn(2+) contacts are provided by cysteine 211, histidine 236, and glutamate 240. The short motif at 270–274 (KMSKS) is the 'KMSKS' region element. An ATP-binding site is contributed by lysine 273.

Belongs to the class-I aminoacyl-tRNA synthetase family. Monomer. Zn(2+) is required as a cofactor.

The protein localises to the cytoplasm. It catalyses the reaction tRNA(Cys) + L-cysteine + ATP = L-cysteinyl-tRNA(Cys) + AMP + diphosphate. The sequence is that of Cysteine--tRNA ligase from Anaplasma marginale (strain St. Maries).